The chain runs to 523 residues: MAIEQIIEEVLPYLTKWYTILFGAAFTYFLSIALRNKYYEYKLKCENPPYFKTAGFVGIPGLIDVIKAKNAGKLADYADQTFDEYPHHSFYMTVAGMLKIVLTVDPENIKAVLATQFNDFALGARHAHFDPLLGDGIFTLDGEGWKHSRAMLRPQFAREQIAHVKALEPHVQVLAKQIKLNKGETFDLQELFFRFTVDTATEFLFGESVHSLYDEKLGVPPPNNIPGRENFAKAFNTSQHYLATRTYSQMFYFLTNPKEFRDCNAKVHKLAQYFVNKALDASEDEVAEKSKGGYVFLYELVKQTRDPKVLQDQLLNIMVAGRDTTAGLLSFAMFELARNPKIWNKLREEIEVNFGLGEEARVDEISFETLKKCEYLKAVLNETLRMYPSVPVNFRTATRDTTLPRGGGKDGTSPIFVPKGSSVVYTVYKTHRLEEYYGKDAYEFRPERWFEPSTRKLGWAYVPFNGGPRICLGQQFALTEASYVITRLAQMFEHLESKDETYPPNKCIHLTMNHNEGVFISAK.

The chain crosses the membrane as a helical span at residues 17 to 34 (WYTILFGAAFTYFLSIAL). Position 471 (Cys471) interacts with heme.

It belongs to the cytochrome P450 family. The cofactor is heme.

It is found in the membrane. In terms of biological role, together with an NADPH cytochrome P450 the enzyme system catalyzes the terminal hydroxylation as the first step in the assimilation of alkanes and fatty acids. The protein is Cytochrome P450 52A3-B (CYP52A3-B) of Candida maltosa (Yeast).